The sequence spans 323 residues: Forkhead transcription factor fkh-6 (323 aa).

Positions 21–122 (KPPYSYVALI…DNGNFKRRRV (102 aa)) form a DNA-binding region, fork-head.

It localises to the nucleus. Functionally, probable transcription factor. Binds to the DNA sequence motif 5'-[TA]TGTT[TG]T[TG][ATG]TT-3'. Regulates sexual dimorphism in the gonad, promoting male gonadal cell fates in chromosomally (XO) male animals, yet plays a role in gonadogenesis in both sexes; probably acts downstream of terminal regulator of sex determination tra-1, to control early gonadogenesis. Positively modulates expression of homeobox protein egl-5, probably acting indirectly, during early gonadal development. The protein is Forkhead transcription factor fkh-6 of Caenorhabditis elegans.